Reading from the N-terminus, the 257-residue chain is Imidazole glycerol phosphate synthase subunit HisF (257 aa).

Active-site residues include aspartate 11 and aspartate 130.

It belongs to the HisA/HisF family. Heterodimer of HisH and HisF.

It is found in the cytoplasm. The catalysed reaction is 5-[(5-phospho-1-deoxy-D-ribulos-1-ylimino)methylamino]-1-(5-phospho-beta-D-ribosyl)imidazole-4-carboxamide + L-glutamine = D-erythro-1-(imidazol-4-yl)glycerol 3-phosphate + 5-amino-1-(5-phospho-beta-D-ribosyl)imidazole-4-carboxamide + L-glutamate + H(+). It participates in amino-acid biosynthesis; L-histidine biosynthesis; L-histidine from 5-phospho-alpha-D-ribose 1-diphosphate: step 5/9. Functionally, IGPS catalyzes the conversion of PRFAR and glutamine to IGP, AICAR and glutamate. The HisF subunit catalyzes the cyclization activity that produces IGP and AICAR from PRFAR using the ammonia provided by the HisH subunit. The polypeptide is Imidazole glycerol phosphate synthase subunit HisF (Shewanella halifaxensis (strain HAW-EB4)).